The primary structure comprises 323 residues: Pathogenicity locus probable regulatory protein WtsA (323 aa).

A Sigma-54 factor interaction domain is found at 41-251 (VAPLEIDLVL…ELKTAAKRFT (211 aa)). ATP-binding positions include 52–59 (GETGTGKD) and 123–132 (EIDSMPLSLQ). The segment at residues 293-312 (IDEAAMELGMPLRTLYHRIK) is a DNA-binding region (H-T-H motif).

Positive activator of wtsB involved in plant pathogenicity. Probably interacts with sigma-54. The protein is Pathogenicity locus probable regulatory protein WtsA (wtsA) of Pantoea stewartii subsp. stewartii (Erwinia stewartii).